Consider the following 208-residue polypeptide: MIVLALDVYDEDRALKIAEETKDYVAMIKVNWPLIIGSGLDIIRKLKDRTGLKIIADLKLADIPNTNKLIARKVYEAGADYIIVHPFVGRDSVEAVNELGEIILVVEMSHPGALEFINPLTDKFIELANDVEPFGVIAPGTRPERVKYIRERLKEGVKILTPGIGAQGGKAKEAIEAGADYVIVGRSIYNAPNPREAAREIYDEIRGE.

Residues Asp7, Lys29, 57 to 66 (DLKLADIPNT), Ser109, 162 to 172 (PGIGAQGGKAK), Gly185, and Arg186 contribute to the substrate site. Lys59 (proton donor) is an active-site residue.

It belongs to the OMP decarboxylase family. Type 1 subfamily. In terms of assembly, homodimer.

The catalysed reaction is orotidine 5'-phosphate + H(+) = UMP + CO2. Its pathway is pyrimidine metabolism; UMP biosynthesis via de novo pathway; UMP from orotate: step 2/2. In terms of biological role, catalyzes the decarboxylation of orotidine 5'-monophosphate (OMP) to uridine 5'-monophosphate (UMP). The protein is Orotidine 5'-phosphate decarboxylase of Pyrococcus abyssi (strain GE5 / Orsay).